The primary structure comprises 453 residues: UPF0210 protein MM_0081 (453 aa).

The protein belongs to the UPF0210 family.

The chain is UPF0210 protein MM_0081 from Methanosarcina mazei (strain ATCC BAA-159 / DSM 3647 / Goe1 / Go1 / JCM 11833 / OCM 88) (Methanosarcina frisia).